We begin with the raw amino-acid sequence, 344 residues long: Heat-inducible transcription repressor HrcA (344 aa).

This sequence belongs to the HrcA family.

In terms of biological role, negative regulator of class I heat shock genes (grpE-dnaK-dnaJ and groELS operons). Prevents heat-shock induction of these operons. In Desulforudis audaxviator (strain MP104C), this protein is Heat-inducible transcription repressor HrcA.